The following is a 217-amino-acid chain: Gas vesicle protein F2 (217 aa).

The protein belongs to the gas vesicle GvpF/GvpL family. Binds GvpA.

Its subcellular location is the gas vesicle. The protein resides in the cytoplasm. In terms of biological role, a minor component of the gas vesicle, may be involved in preventing GvpA aggregation during gas vesicle nucleation. Gas vesicles are hollow, gas filled proteinaceous nanostructures found in several microbial planktonic microorganisms. They allow positioning of halobacteria at the optimal depth for growth in the poorly aerated, shallow brine pools of their habitat. Expression of 2 c-vac DNA fragments containing 2 divergently transcribed regions (gvpE-gvpF-gvpG-gvpH-gvpI-gvpJ-gvpK-gvpL-gvpM and gvpA-gvpC-gvpN-gvpO) allows H.volcanii to produce gas vesicles. Note that gvpD is not necessary for gas vesicle formation. This Halobacterium salinarum (strain ATCC 700922 / JCM 11081 / NRC-1) (Halobacterium halobium) protein is Gas vesicle protein F2.